The sequence spans 327 residues: Complex I intermediate-associated protein 30, mitochondrial (327 aa).

A mitochondrion-targeting transit peptide spans 1 to 24 (MALVHKLLRDTYILRKFSKPTSAL). Residues 42–63 (PVASPGKASSQRKTEGDLQGDH) form a disordered region. The segment covering 53–63 (RKTEGDLQGDH) has biased composition (basic and acidic residues). At Ser-318 the chain carries Phosphoserine.

This sequence belongs to the CIA30 family. Part of the mitochondrial complex I assembly/MCIA complex that comprises at least the core subunits TMEM126B, NDUFAF1, ECSIT and ACAD9 and complement subunits such as COA1 and TMEM186. Interacts with ECSIT. Interacts with ACAD9. At early stages of complex I assembly, it is found in intermediate subcomplexes that contain different subunits including NDUFB6, NDUFA6, NDUFA9, NDUFS3, NDUFS7, ND1, ND2 and ND3. Interacts with TMEM70 and TMEM242.

The protein resides in the mitochondrion. It localises to the mitochondrion matrix. Its function is as follows. As part of the MCIA complex, involved in the assembly of the mitochondrial complex I. The sequence is that of Complex I intermediate-associated protein 30, mitochondrial from Gorilla gorilla gorilla (Western lowland gorilla).